Here is a 692-residue protein sequence, read N- to C-terminus: Translation initiation factor IF-2 (692 aa).

Residues 194–363 (PRPPIVTVMG…LLVAEMEDLK (170 aa)) enclose the tr-type G domain. Residues 203–210 (GHVDHGKT) form a G1 region. Position 203 to 210 (203 to 210 (GHVDHGKT)) interacts with GTP. The G2 stretch occupies residues 228 to 232 (GITQH). A G3 region spans residues 249 to 252 (DTPG). Residues 249-253 (DTPGH) and 303-306 (NKID) contribute to the GTP site. A G4 region spans residues 303–306 (NKID). Positions 339–341 (SAK) are G5.

The protein belongs to the TRAFAC class translation factor GTPase superfamily. Classic translation factor GTPase family. IF-2 subfamily.

It is found in the cytoplasm. Its function is as follows. One of the essential components for the initiation of protein synthesis. Protects formylmethionyl-tRNA from spontaneous hydrolysis and promotes its binding to the 30S ribosomal subunits. Also involved in the hydrolysis of GTP during the formation of the 70S ribosomal complex. The polypeptide is Translation initiation factor IF-2 (Thermoanaerobacter sp. (strain X514)).